The following is a 421-amino-acid chain: tRNA (guanine-N(7)-)-methyltransferase non-catalytic subunit TRM82 (421 aa).

WD repeat units lie at residues 72 to 112, 170 to 212, and 216 to 258; these read AVYS…EDPE, GHVS…IVDK, and GHKE…SQYS.

This sequence belongs to the WD repeat TRM82 family. As to quaternary structure, forms a heterodimer with the catalytic subunit TRM8.

It is found in the nucleus. Its pathway is tRNA modification; N(7)-methylguanine-tRNA biosynthesis. Required for the formation of N(7)-methylguanine at position 46 (m7G46) in tRNA. In the complex, it is required to stabilize and induce conformational changes of the catalytic subunit. The sequence is that of tRNA (guanine-N(7)-)-methyltransferase non-catalytic subunit TRM82 from Candida glabrata (strain ATCC 2001 / BCRC 20586 / JCM 3761 / NBRC 0622 / NRRL Y-65 / CBS 138) (Yeast).